Reading from the N-terminus, the 117-residue chain is Appetite-regulating hormone (117 aa).

The signal sequence occupies residues methionine 1–alanine 23. Residue serine 26 is the site of O-decanoyl serine; alternate attachment. Serine 26 carries O-hexanoyl serine; alternate lipidation. Serine 26 is lipidated: O-octanoyl serine; alternate. Residues leucine 28–alanine 68 are disordered. A compositionally biased stretch (basic and acidic residues) spans glutamate 31–lysine 43. Residues alanine 52–arginine 75 constitute a propeptide, removed in mature form. Leucine 98 is subject to Leucine amide. Residues glycine 99–lysine 117 constitute a propeptide, removed in mature form.

Belongs to the motilin family. Post-translationally, O-octanoylated by GOAT/MBOAT4. O-octanoylation is essential for ghrelin activity. The replacement of Ser-26 by aromatic tryptophan preserves ghrelin activity. In terms of processing, amidation of Leu-98 is essential for obestatin activity. Ghrelin is broadly expressed with higher expression in the stomach. Very low levels are detected in the hypothalamus, heart, lung, pancreas, intestine and adipose tissue. Obestatin is most highly expressed in jejunum, and also found in duodenum, stomach, pituitary, ileum, liver, hypothalamus and heart. Expressed in low levels in pancreas, cerebellum, cerebrum, kidney, testis, ovary colon and lung.

The protein localises to the secreted. Its function is as follows. Ghrelin is the ligand for growth hormone secretagogue receptor type 1 (GHSR). Induces the release of growth hormone from the pituitary. Has an appetite-stimulating effect, induces adiposity and stimulates gastric acid secretion. Involved in growth regulation. Functionally, obestatin may be the ligand for GPR39. May have an appetite-reducing effect resulting in decreased food intake. May reduce gastric emptying activity and jejunal motility. In Rattus norvegicus (Rat), this protein is Appetite-regulating hormone (Ghrl).